Reading from the N-terminus, the 774-residue chain is 5-methyltetrahydropteroyltriglutamate--homocysteine methyltransferase (774 aa).

Residues 23-26 (RELK) and lysine 123 contribute to the 5-methyltetrahydropteroyltri-L-glutamate site. Residues 446-448 (IGS) and glutamate 499 each bind L-homocysteine. Residues 446-448 (IGS) and glutamate 499 contribute to the L-methionine site. Residues 530–531 (RC) and tryptophan 576 contribute to the 5-methyltetrahydropteroyltri-L-glutamate site. Residue aspartate 614 participates in L-homocysteine binding. Aspartate 614 is a binding site for L-methionine. Residue glutamate 620 coordinates 5-methyltetrahydropteroyltri-L-glutamate. Zn(2+) is bound by residues histidine 656, cysteine 658, and glutamate 680. Histidine 709 (proton donor) is an active-site residue. Zn(2+) is bound at residue cysteine 741.

Belongs to the vitamin-B12 independent methionine synthase family. The cofactor is Zn(2+).

The catalysed reaction is 5-methyltetrahydropteroyltri-L-glutamate + L-homocysteine = tetrahydropteroyltri-L-glutamate + L-methionine. Its pathway is amino-acid biosynthesis; L-methionine biosynthesis via de novo pathway; L-methionine from L-homocysteine (MetE route): step 1/1. Its function is as follows. Catalyzes the transfer of a methyl group from 5-methyltetrahydrofolate to homocysteine resulting in methionine formation. This chain is 5-methyltetrahydropteroyltriglutamate--homocysteine methyltransferase, found in Aliivibrio fischeri (strain ATCC 700601 / ES114) (Vibrio fischeri).